Reading from the N-terminus, the 250-residue chain is tRNA (guanine-N(1)-)-methyltransferase (250 aa).

S-adenosyl-L-methionine contacts are provided by residues Gly112 and 132–137 (IGDFVL).

It belongs to the RNA methyltransferase TrmD family. As to quaternary structure, homodimer.

The protein resides in the cytoplasm. The enzyme catalyses guanosine(37) in tRNA + S-adenosyl-L-methionine = N(1)-methylguanosine(37) in tRNA + S-adenosyl-L-homocysteine + H(+). In terms of biological role, specifically methylates guanosine-37 in various tRNAs. In Marinomonas sp. (strain MWYL1), this protein is tRNA (guanine-N(1)-)-methyltransferase.